The following is a 2849-amino-acid chain: Polycystin-1-like protein 1 (2849 aa).

The Extracellular portion of the chain corresponds to 1-1748 (MAEEAAQNIS…SDISKLQSHP (1748 aa)). 13 N-linked (GlcNAc...) asparagine glycosylation sites follow: N8, N295, N338, N376, N447, N482, N514, N605, N657, N751, N875, N926, and N937. PKD domains are found at residues 508–590 (SVSV…VQKK) and 592–673 (VANR…VCEP). Residues 674–1571 (CQPPLVKNMG…GEEDGLDNRR (898 aa)) form the REJ domain. Over residues 970-987 (NLLPTEPGTADPDATTTP) the composition is skewed to low complexity. 2 disordered regions span residues 970-1068 (NLLP…PHLS) and 1081-1118 (IPSG…DPSL). Positions 1053–1068 (RSERSQPTHSPDPHLS) are enriched in basic and acidic residues. N-linked (GlcNAc...) asparagine glycosylation is found at N1233, N1301, N1306, N1572, N1681, and N1716. The GAIN-B domain occupies 1587–1735 (QFTELSENPQ…ALLRRKLKAS (149 aa)). A disulfide bond links C1691 and C1717. Positions 1691 to 1735 (CLFWDKREWKSERFSPQPGTSPEKVNCSYHRLAAFALLRRKLKAS) are GPS. Residues 1749-1769 (ENLLPSIFIMGSVILYGFLVA) form a helical membrane-spanning segment. Over 1770–1956 (KSRQVDHHEK…SSSRYLHTPR (187 aa)) the chain is Cytoplasmic. Positions 1796-1913 (QLYAVVIDTG…HDGRVERELT (118 aa)) constitute a PLAT domain. Residues 1957–1977 (LTVSFSLLCVYACLTALVAAG) traverse the membrane as a helical segment. At 1978-1992 (GQEQPHLDVSPTLGS) the chain is on the extracellular side. The helical transmembrane segment at 1993-2013 (FRVGLLCTLLASPGAQLLSLL) threads the bilayer. Topologically, residues 2014 to 2135 (FRLSKEAPGS…SRALQPWWSS (122 aa)) are cytoplasmic. Residues 2023 to 2089 (SARVEPHSPL…GTACPAPKLQ (67 aa)) form a disordered region. The helical transmembrane segment at 2136–2156 (AVWAICGTASLACSLGTGFLA) threads the bilayer. The Extracellular segment spans residues 2157 to 2174 (YRFGQEQCVQWLHLLSLS). Residues 2175 to 2195 (VVCCIFITQPLMVCLMALGFA) form a helical membrane-spanning segment. At 2196–2281 (WKRRADNHFF…QRMRRESRTR (86 aa)) the chain is on the cytoplasmic side. A helical membrane pass occupies residues 2282–2302 (AALRDISMDILMLLLLLCVIY). Topologically, residues 2303-2522 (GRFSQDEYSL…FRSDSALQYH (220 aa)) are extracellular. N-linked (GlcNAc...) asparagine glycosylation occurs at N2426. The chain crosses the membrane as a helical span at residues 2523-2543 (LMLPQLVFLALSLIHLCVQLY). The Cytoplasmic portion of the chain corresponds to 2544–2562 (RMMDKGVLSYWRKPRNWLE). Residues 2563-2583 (LSVVGVSLTYYAVSGHLVTLA) form a helical membrane-spanning segment. Over 2584-2616 (GDVTNQFHRGLCRAFMDLTLMASWNQRARWLRG) the chain is Extracellular. The chain crosses the membrane as a helical span at residues 2617-2637 (ILLFLFTLKCVYLPGIQNTMA). Residues 2638-2646 (SCSSMMRHS) lie on the Cytoplasmic side of the membrane. A helical transmembrane segment spans residues 2647-2667 (LPSIFVAGLVGALMLAALSHL). The Extracellular segment spans residues 2668–2711 (HRFLLSMWVLPPGTFTDAFPGLLFHFPRRSQKDCLLGLSKSDQR). The chain crosses the membrane as a helical span at residues 2712–2732 (AMACYFGILLIVSATLCFGML). Residues 2733–2849 (RGFLMTLPQK…AAEPADIKDF (117 aa)) lie on the Cytoplasmic side of the membrane.

The protein belongs to the polycystin family. In terms of assembly, heterodimer. Interacts with PKD2 to form a calcium channel. Interacts with PKD2L1; to form ciliary calcium channel. May interact with GNA12, GNAS, GNAI1 and GNAI2. As to expression, detected in testis and in fetal and adult heart.

It is found in the cell projection. The protein localises to the cilium membrane. Its function is as follows. Component of a calcium-permeant ion channel formed by PKD1L2 and PKD1L1 in primary cilia, where it controls cilium calcium concentration, without affecting cytoplasmic calcium concentration, and regulates sonic hedgehog/SHH signaling and GLI2 transcription. The PKD1L1:PKD2L1 channel complex is mechanosensitive only at high pressures and is highly temperature sensitive. Also involved in left/right axis specification downstream of nodal flow by forming a complex with PKD2 in cilia to facilitate flow detection in left/right patterning. May function as a G-protein-coupled receptor. The protein is Polycystin-1-like protein 1 of Homo sapiens (Human).